The primary structure comprises 232 residues: Histone H1B (232 aa).

Residues 1-18 show a composition bias toward low complexity; sequence MSDPAVEVTPAVPVASPA. 2 disordered regions span residues 1-44 and 99-232; these read MSDP…PPVS and QTKG…AKKA. Residues 39 to 113 form the H15 domain; it reads THPPVSEMVV…GASGSFKLPA (75 aa). Composition is skewed to basic residues over residues 132–141, 147–173, 181–197, 205–214, and 222–232; these read KPKKAAAKPK, KVKK…KTTK, AAKK…KPKA, KRAAAPKAKK, and KAAKKPAAKKA.

The protein belongs to the histone H1/H5 family.

The protein resides in the nucleus. It localises to the chromosome. Its function is as follows. Histones H1 are necessary for the condensation of nucleosome chains into higher-order structures. The chain is Histone H1B from Chironomus tentans (Midge).